A 370-amino-acid chain; its full sequence is Molybdenum import ATP-binding protein ModC (370 aa).

The ABC transporter domain maps to 2 to 233 (SVRVDIGHRL…LDLLPAEERG (232 aa)). 31–38 (GPSGSGKT) is an ATP binding site. One can recognise a Mop domain in the interval 293–359 (GLSALNILPG…VKTVSFDRAN (67 aa)).

Belongs to the ABC transporter superfamily. Molybdate importer (TC 3.A.1.8) family. The complex is composed of two ATP-binding proteins (ModC), two transmembrane proteins (ModB) and a solute-binding protein (ModA).

It localises to the cell inner membrane. It catalyses the reaction molybdate(out) + ATP + H2O = molybdate(in) + ADP + phosphate + H(+). Part of the ABC transporter complex ModABC involved in molybdenum import. Responsible for energy coupling to the transport system. The chain is Molybdenum import ATP-binding protein ModC from Mesorhizobium japonicum (strain LMG 29417 / CECT 9101 / MAFF 303099) (Mesorhizobium loti (strain MAFF 303099)).